The sequence spans 429 residues: 3-phosphoshikimate 1-carboxyvinyltransferase (429 aa).

3-phosphoshikimate contacts are provided by lysine 25, serine 26, and arginine 30. Residue lysine 25 participates in phosphoenolpyruvate binding. Glycine 99 and arginine 127 together coordinate phosphoenolpyruvate. The 3-phosphoshikimate site is built by serine 173, serine 174, glutamine 175, serine 201, aspartate 317, asparagine 340, and lysine 344. Glutamine 175 contacts phosphoenolpyruvate. Residue aspartate 317 is the Proton acceptor of the active site. Phosphoenolpyruvate-binding residues include arginine 348, arginine 390, and lysine 415.

The protein belongs to the EPSP synthase family. Monomer.

The protein localises to the cytoplasm. It carries out the reaction 3-phosphoshikimate + phosphoenolpyruvate = 5-O-(1-carboxyvinyl)-3-phosphoshikimate + phosphate. The protein operates within metabolic intermediate biosynthesis; chorismate biosynthesis; chorismate from D-erythrose 4-phosphate and phosphoenolpyruvate: step 6/7. Catalyzes the transfer of the enolpyruvyl moiety of phosphoenolpyruvate (PEP) to the 5-hydroxyl of shikimate-3-phosphate (S3P) to produce enolpyruvyl shikimate-3-phosphate and inorganic phosphate. The chain is 3-phosphoshikimate 1-carboxyvinyltransferase from Pseudoalteromonas atlantica (strain T6c / ATCC BAA-1087).